The primary structure comprises 711 residues: Triacylglycerol hydrolase DDHD2 (711 aa).

Residues 1–24 (MSSVQSQQEQLSQSDPSPSPNSCS) form a disordered region. A WWE domain is found at 30–112 (DMDAGSLYEP…WDELASEVRR (83 aa)). Ser351 serves as the catalytic Nucleophile. The SAM domain maps to 385-448 (GDTPTLEEDL…NYFSTRKNSM (64 aa)). Ser447 carries the post-translational modification Phosphoserine. Disordered stretches follow at residues 449-470 (GIKRPAPQPASGANIPKESEFC) and 609-638 (LQASETPEETEAEPESTSEKPSDVNTEETS). One can recognise a DDHD domain in the interval 495–700 (LIYKPEIFFA…VLLVLKEIYQ (206 aa)). Residues 614-624 (TPEETEAEPES) show a composition bias toward acidic residues.

Belongs to the PA-PLA1 family. In terms of assembly, forms homooligomers and, to a much smaller extent, heterooligomers with DDHD1. As to expression, widely expressed (at protein level).

The protein resides in the cytoplasm. The protein localises to the cytosol. It localises to the endoplasmic reticulum-Golgi intermediate compartment. It is found in the golgi apparatus. Its subcellular location is the cis-Golgi network. It catalyses the reaction a triacylglycerol + H2O = a diacylglycerol + a fatty acid + H(+). The catalysed reaction is a diacylglycerol + H2O = a monoacylglycerol + a fatty acid + H(+). The enzyme catalyses a 1,3-diacylglycerol + H2O = a 1-acylglycerol + a fatty acid + H(+). It carries out the reaction a 1-acylglycerol + H2O = glycerol + a fatty acid + H(+). It catalyses the reaction 1,2,3-tri-(9Z-octadecenoyl)-glycerol + H2O = di-(9Z)-octadecenoylglycerol + (9Z)-octadecenoate + H(+). The catalysed reaction is di-(9Z)-octadecenoylglycerol + H2O = (9Z-octadecenoyl)-glycerol + (9Z)-octadecenoate + H(+). The enzyme catalyses 1,3-di-(9Z-octadecenoyl)-glycerol + H2O = 1-(9Z-octadecenoyl)-glycerol + (9Z)-octadecenoate + H(+). It carries out the reaction trihexadecanoylglycerol + H2O = dihexadecanoylglycerol + hexadecanoate + H(+). It catalyses the reaction 1,2-di-(9Z-octadecenoyl)-sn-glycero-3-phosphocholine + H2O = (9Z-octadecenoyl)-sn-glycero-3-phosphocholine + (9Z)-octadecenoate + H(+). The catalysed reaction is 1-(9Z-octadecenoyl)-glycerol + H2O = glycerol + (9Z)-octadecenoate + H(+). The enzyme catalyses 1,2-di-(9Z-octadecenoyl)-sn-glycero-3-phosphate + H2O = 2-(9Z-octadecenoyl)-sn-glycero-3-phosphate + (9Z)-octadecenoate + H(+). It carries out the reaction 1-hexadecanoyl-2-(9Z-octadecenoyl)-sn-glycero-3-phosphate + H2O = 2-(9Z-octadecenoyl)-sn-glycero-3-phosphate + hexadecanoate + H(+). It catalyses the reaction 1-hexadecanoyl-2-(9Z-octadecenoyl)-sn-glycero-3-phosphoethanolamine + H2O = 2-(9Z-octadecenoyl)-sn-glycero-3-phosphoethanolamine + hexadecanoate + H(+). The catalysed reaction is 1-hexadecanoyl-2-(9Z-octadecenoyl)-sn-glycero-3-phospho-L-serine + H2O = 2-(9Z-octadecenoyl)-sn-glycero-3-phospho-L-serine + hexadecanoate + H(+). The enzyme catalyses 1-hexadecanoyl-2-(9Z-octadecenoyl)-sn-glycero-3-phosphocholine + H2O = 2-(9Z-octadecenoyl)-sn-glycero-3-phosphocholine + hexadecanoate + H(+). Functionally, diacylglycerol (DAG) and triacylglycerol (TAG) lipase required for proper lipid homeostasis in the central nervous system. It cooperates with PNPLA2/ATGL in neuronal TAG catabolism and hydrolyzes sn-1,3 DAG downstream of PNPLA2/ATGL. In vitro, it also acts as a phospholipase that hydrolyzes preferentially phosphatidic acids, including 1,2-dioleoyl-sn-phosphatidic acid, phosphatidylcholine and phosphatidylethanolamine. Specifically binds to phosphatidylinositol 3-phosphate (PI(3)P), phosphatidylinositol 4-phosphate (PI(4)P), phosphatidylinositol 5-phosphate (PI(5)P) and possibly phosphatidylinositol 4,5-bisphosphate (PI(4,5)P2). May be involved in the maintenance of the endoplasmic reticulum and/or Golgi structures. May regulate the transport between Golgi apparatus and plasma membrane. The sequence is that of Triacylglycerol hydrolase DDHD2 from Homo sapiens (Human).